Here is a 312-residue protein sequence, read N- to C-terminus: MTTEDTQYAHQPVMLEEVLDMWFSQSEGFYVDGTFGRGGHSRALLSRLGENGRLIGIDRDPQAIAAGQQLAASDSRFHMMAGRFDCLPQAVEQAGRPIDGLLLDLGVSSPQLDDAARGFSFLRDGPLDMRMDPTQGESVAEWLSYAAEKDIANVLYRYGEERKSRWIAKRICETRKEQPITRTLQLADLIESVLGRNEQGKHPATRSFQALRIHINGELDALDQVLEQSLETLAIGGRLAIISFHSLEDRIVKLFIRDHSGRAPKGRGGLPLGDELPQRLEPVGKVMRASKAELKVNVRSRSAVLRIAEKVA.

S-adenosyl-L-methionine is bound by residues 38–40 (GGH), aspartate 58, phenylalanine 84, aspartate 104, and glutamine 111.

It belongs to the methyltransferase superfamily. RsmH family.

It is found in the cytoplasm. It carries out the reaction cytidine(1402) in 16S rRNA + S-adenosyl-L-methionine = N(4)-methylcytidine(1402) in 16S rRNA + S-adenosyl-L-homocysteine + H(+). Specifically methylates the N4 position of cytidine in position 1402 (C1402) of 16S rRNA. This chain is Ribosomal RNA small subunit methyltransferase H, found in Alcanivorax borkumensis (strain ATCC 700651 / DSM 11573 / NCIMB 13689 / SK2).